Here is a 424-residue protein sequence, read N- to C-terminus: Chitinase CLP (424 aa).

The first 18 residues, 1–18, serve as a signal peptide directing secretion; sequence MSLHLLLAVSLCVALASS. Positions 43–405 constitute a Peptidase A1 domain; it reads AATSLYTVPI…DEEKQRLGFS (363 aa). N-linked (GlcNAc...) asparagine glycosylation is found at asparagine 139, asparagine 345, and asparagine 419.

It belongs to the peptidase A1 family. As to expression, expressed in roots. Expressed at low levels in leaf sheaths, stems and flowers.

The protein resides in the secreted. It localises to the extracellular space. The protein localises to the apoplast. The enzyme catalyses Random endo-hydrolysis of N-acetyl-beta-D-glucosaminide (1-&gt;4)-beta-linkages in chitin and chitodextrins.. Functionally, chitinase that possesses antifungal activity. Inhibits the growth of the fungal pathogen Rhizoctonia solani by degrading the fungal cell wall. Does not possess inhibiting activity against fungal endo-1,4-beta-D-xylanases belonging to glycoside hydrolase family 10 (GH10) and family 11 (GH11). Involved in the regulation of plant growth by regulating the intracellular calcium ion concentration in roots. This Oryza sativa subsp. japonica (Rice) protein is Chitinase CLP.